A 437-amino-acid chain; its full sequence is Dolichyl-diphosphooligosaccharide--protein glycosyltransferase subunit wbp1 (437 aa).

An N-terminal signal peptide occupies residues 1-19 (MKSALCIALALTWSLLVQA). Over 20 to 401 (ARQTVLAVAD…FPRFLPHAYP (382 aa)) the chain is Lumenal. N-linked (GlcNAc...) asparagine glycosylation is found at N275 and N289. The helical transmembrane segment at 402-422 (YYASCFSVLGAFLLFCGIWLL) threads the bilayer. The Cytoplasmic portion of the chain corresponds to 423–437 (QKPAKPVVPSAKKQN).

It belongs to the DDOST 48 kDa subunit family. As to quaternary structure, component of the oligosaccharyltransferase (OST) complex.

It is found in the endoplasmic reticulum. Its subcellular location is the membrane. It participates in protein modification; protein glycosylation. Functionally, subunit of the oligosaccharyl transferase (OST) complex that catalyzes the initial transfer of a defined glycan (Glc(3)Man(9)GlcNAc(2) in eukaryotes) from the lipid carrier dolichol-pyrophosphate to an asparagine residue within an Asn-X-Ser/Thr consensus motif in nascent polypeptide chains, the first step in protein N-glycosylation. N-glycosylation occurs cotranslationally and the complex associates with the Sec61 complex at the channel-forming translocon complex that mediates protein translocation across the endoplasmic reticulum (ER). All subunits are required for a maximal enzyme activity. The protein is Dolichyl-diphosphooligosaccharide--protein glycosyltransferase subunit wbp1 (wbp1) of Schizosaccharomyces pombe (strain 972 / ATCC 24843) (Fission yeast).